Consider the following 546-residue polypeptide: Chaperonin GroEL (546 aa).

Residues Thr30–Pro33, Lys51, Asp87–Thr91, Gly415, Asn479–Ala481, and Asp495 each bind ATP. The disordered stretch occupies residues Lys526–Met546. The segment covering Ala533–Met546 has biased composition (gly residues).

Belongs to the chaperonin (HSP60) family. In terms of assembly, forms a cylinder of 14 subunits composed of two heptameric rings stacked back-to-back. Interacts with the co-chaperonin GroES.

It is found in the cytoplasm. It catalyses the reaction ATP + H2O + a folded polypeptide = ADP + phosphate + an unfolded polypeptide.. In terms of biological role, together with its co-chaperonin GroES, plays an essential role in assisting protein folding. The GroEL-GroES system forms a nano-cage that allows encapsulation of the non-native substrate proteins and provides a physical environment optimized to promote and accelerate protein folding. The chain is Chaperonin GroEL from Thioalkalivibrio sulfidiphilus (strain HL-EbGR7).